The chain runs to 830 residues: DNA-directed RNA polymerase subunit beta'' (830 aa).

Residues Cys219, Cys291, Cys298, and Cys301 each coordinate Zn(2+).

Belongs to the RNA polymerase beta' chain family. RpoC2 subfamily. In terms of assembly, in plastids the minimal PEP RNA polymerase catalytic core is composed of four subunits: alpha, beta, beta', and beta''. When a (nuclear-encoded) sigma factor is associated with the core the holoenzyme is formed, which can initiate transcription. Requires Zn(2+) as cofactor.

The protein localises to the plastid. It is found in the chloroplast. The enzyme catalyses RNA(n) + a ribonucleoside 5'-triphosphate = RNA(n+1) + diphosphate. Functionally, DNA-dependent RNA polymerase catalyzes the transcription of DNA into RNA using the four ribonucleoside triphosphates as substrates. This chain is DNA-directed RNA polymerase subunit beta'' (rpoC2), found in Euglena gracilis.